A 63-amino-acid chain; its full sequence is Large ribosomal subunit protein uL30 (63 aa).

Belongs to the universal ribosomal protein uL30 family. Part of the 50S ribosomal subunit.

In Rickettsia prowazekii (strain Madrid E), this protein is Large ribosomal subunit protein uL30.